The primary structure comprises 515 residues: Aldehyde dehydrogenase tropH (515 aa).

238-243 lines the NAD(+) pocket; the sequence is GSVATG. Glu260 functions as the Proton acceptor in the catalytic mechanism. Cys295 functions as the Nucleophile in the catalytic mechanism.

Belongs to the aldehyde dehydrogenase family.

It catalyses the reaction an aldehyde + NAD(+) + H2O = a carboxylate + NADH + 2 H(+). The protein operates within secondary metabolite biosynthesis. Its function is as follows. Aldehyde dehydrogenase; part of the gene cluster that mediates the biosynthesis of the tropolone class of fungal maleic anhydrides. The pathway begins with the synthesis of 3-methylorcinaldehyde by the non-reducing polyketide synthase (PKS) tropA. 3-methylorcinaldehyde is the substrate for the FAD-dependent monooxygenase tropB to yield a dearomatized hydroxycyclohexadione. The 2-oxoglutarate-dependent dioxygenase tropC then performs the oxidative ring expansion to provide the first tropolone metabolite stipitaldehyde. Trop D converts stipitaldehyde into stipitacetal which is in turn converted to stipitalide by the short-chain dehydrogenase/reductase tropE. The next steps involve tropF, tropG, tropH, tropI and tropJ to form successive tropolone maleic anhydrides including stipitaldehydic, stipitatonic and stipitatic acids. This chain is Aldehyde dehydrogenase tropH, found in Talaromyces stipitatus (strain ATCC 10500 / CBS 375.48 / QM 6759 / NRRL 1006) (Penicillium stipitatum).